The primary structure comprises 173 residues: Membrane-bound hydrogenase subunit beta (173 aa).

This sequence belongs to the complex I 30 kDa subunit family. As to quaternary structure, the membrane-bound hydrogenase complex is composed of MbhK and MbhL, and may also contain MbhJ. Requires Ni(2+) as cofactor.

Its subcellular location is the cell membrane. It carries out the reaction H2 + 2 oxidized [2Fe-2S]-[ferredoxin] = 2 reduced [2Fe-2S]-[ferredoxin] + 2 H(+). Its activity is regulated as follows. Inhibited by 0.1 mM Cu(2+). Its function is as follows. Beta subunit of a hydrogen-evolving hydrogenase that utilizes protons both as a substrate for hydrogen production and proton translocation. Acts by coupling the redox reaction via ferredoxin and iron-sulfur (Fe-S) clusters to proton translocation across the membrane thereby conserving the redox energy in a proton gradient. The sequence is that of Membrane-bound hydrogenase subunit beta from Pyrococcus furiosus (strain ATCC 43587 / DSM 3638 / JCM 8422 / Vc1).